The primary structure comprises 167 residues: Pathogenesis-related protein PR-1 type (167 aa).

Residues 1-29 (MAHNHWCNLFSVALVCVVALVMVQYSVAQ) form the signal peptide. Residues 36–155 (VDAHNAARSA…NGAWFITCNY (120 aa)) form the SCP domain. 3 cysteine pairs are disulfide-bonded: C72-C144, C117-C123, and C139-C153.

It belongs to the CRISP family.

Its function is as follows. Probably involved in the defense reaction of plants against pathogens. The polypeptide is Pathogenesis-related protein PR-1 type (Sambucus nigra (European elder)).